We begin with the raw amino-acid sequence, 801 residues long: Probable inorganic carbon transporter subunit DabA (801 aa).

Positions 332, 334, 500, and 515 each coordinate Zn(2+).

Belongs to the inorganic carbon transporter (TC 9.A.2) DabA family. As to quaternary structure, forms a complex with DabB. The cofactor is Zn(2+).

The protein resides in the cell inner membrane. Its function is as follows. Part of an energy-coupled inorganic carbon pump. The sequence is that of Probable inorganic carbon transporter subunit DabA from Marinobacter nauticus (strain ATCC 700491 / DSM 11845 / VT8) (Marinobacter aquaeolei).